Reading from the N-terminus, the 324-residue chain is Endochitinase B (324 aa).

The N-terminal stretch at 1 to 23 is a signal peptide; the sequence is MRLREFTALSSLLFSLLLLSASA. A Chitin-binding type-1 domain is found at 24-65; sequence EQCGSQAGGARCASGLCCSKFGWCGNTNDYCGPGNCQSQCPG. 4 cysteine pairs are disulfide-bonded: Cys-26–Cys-41, Cys-35–Cys-47, Cys-40–Cys-54, and Cys-59–Cys-63. 2 positions are modified to 4-hydroxyproline: Pro-67 and Pro-69. Cystine bridges form between Cys-96–Cys-158, Cys-170–Cys-178, and Cys-277–Cys-309. Glu-140 functions as the Proton donor in the catalytic mechanism. Residues 318 to 324 constitute a propeptide, removed in mature form; it reads GLLVDTM.

Belongs to the glycosyl hydrolase 19 family. Chitinase class I subfamily. Post-translationally, the 4-hydroxyproline residues are not glycosylated in this plant vacuolar protein.

It is found in the vacuole. It carries out the reaction Random endo-hydrolysis of N-acetyl-beta-D-glucosaminide (1-&gt;4)-beta-linkages in chitin and chitodextrins.. Defense against chitin-containing fungal pathogens. The sequence is that of Endochitinase B (CHN50) from Nicotiana tabacum (Common tobacco).